Consider the following 329-residue polypeptide: Transcription factor RF2b (329 aa).

2 disordered regions span residues 1 to 24 (MQEP…RSEV) and 62 to 97 (SSGP…DGSG). The bZIP domain maps to 132 to 195 (DPKRAKRILA…TGLSAENAEL (64 aa)). The interval 134–155 (KRAKRILANRQSAARSKERKAR) is basic motif. A leucine-zipper region spans residues 160–174 (LERKVQTLQTEATTL). The disordered stretch occupies residues 260-303 (RQNGGTQLPPQFQPPRPNVPNHMLSHPNGLQDIMQQDPLGRLQG).

This sequence belongs to the bZIP family. As to quaternary structure, binds DNA as a homodimer or as a heterodimer with RF2a. The heterodimer binds stronger to DNA than the homodimer. As to expression, expressed at high levels in roots, low level in leaf sheath, but not in leaf blade. Predominantly expressed in vascular tissues.

Its subcellular location is the nucleus. Transcription factor probably involved in vascular development and shoot tissue organization. Binds to the DNA sequence 5'-CCGAGTGTGCCCCTGG-3' present in the promoter region Box II of the phloem-specific rice tungro bacilliform virus (RTBV) promoter. May regulate tissue-specific expression of the RTBV promoter and virus replication. The sequence is that of Transcription factor RF2b (RF2b) from Oryza sativa subsp. japonica (Rice).